A 334-amino-acid polypeptide reads, in one-letter code: Glutamyl-tRNA reductase (334 aa).

Substrate-binding positions include 49-52, S107, 112-114, and Q118; these read TCNR and EDQ. C50 functions as the Nucleophile in the catalytic mechanism. 186 to 191 provides a ligand contact to NADP(+); that stretch reads GNGEMG.

Belongs to the glutamyl-tRNA reductase family. Homodimer.

The enzyme catalyses (S)-4-amino-5-oxopentanoate + tRNA(Glu) + NADP(+) = L-glutamyl-tRNA(Glu) + NADPH + H(+). Its pathway is porphyrin-containing compound metabolism; protoporphyrin-IX biosynthesis; 5-aminolevulinate from L-glutamyl-tRNA(Glu): step 1/2. In terms of biological role, catalyzes the NADPH-dependent reduction of glutamyl-tRNA(Glu) to glutamate 1-semialdehyde (GSA). The protein is Glutamyl-tRNA reductase of Alkaliphilus oremlandii (strain OhILAs) (Clostridium oremlandii (strain OhILAs)).